The following is an 830-amino-acid chain: MGRTQKKNSKGRLDRYYYLAKEKGYRARSSFKIIQINEKFGHFLEKSKVVIDLCAAPGSWCQVASNLCPVNSLIIGVDIVPMQPMPNVITFQSDITTEDCRSKLRGYMKTWKADTVLHDGAPNVGLNWVQDAFTQSHLTLQALKLAVENLVVGGTFVTKIFRSKDYNKLMWVFQQLFDKVEATKPPASRNVSAEIFVVCKGFKAPKKLDPRLLDPKEVFEELPDGPQNMQAKVYNPEKKTRKRDGYEEGDYLLYHTVPIMDFVKVEDPIQMLGTTNKFTLDKDDHEWKIVKKLKQTTPEFKACIEDLKVLGKKDFKMLLRWRKAARELLGLDKDEEQPEIETVPLTEEEQIEKELQEMQQKQNLKKKREKRKQNEIKQKEITRMQMQMITPTDLGIEAASIGRDSLFNLKTAEKTGILDDLARGKKRMVFTRDELAEDNEIQIDENAPLSDRDDLADADELESQLDAMYHQFKARRIERDAHFKAKEARGGDDDAWNGFDEVASDEEPEESKKDYVDDDDSDVSDSDSDEAINQLIAKIKGETGDKKLSAKARALFNDSIFDGVEADLPSEEPQAPASSEQGSKKRRLEEVSEESSSDEEEAEEESDSDFEIVRNEKDESDDDYDSEDEAERSQKEKHAREVDIATVEAMTLAHQLALGQRSKHDIVDEGFNRYSFRDRDNLPEWFLEDEKMHSKINKPITKEAAMAIKEKLKALNARPIKKVAEAKARKKMRALNRLEKLKKKAGLINDDSDKSEKDKAEEIAKLMKKVTKKAKLKPKVTLVVAKGKNRGLSGRPKGIKGKYKMVDGVMKNEQRALKRIAKKHRKKSKH.

S-adenosyl-L-methionine contacts are provided by glycine 58, tryptophan 60, aspartate 78, aspartate 94, and aspartate 119. Catalysis depends on lysine 159, which acts as the Proton acceptor. A coiled-coil region spans residues 345-388 (LTEEEQIEKELQEMQQKQNLKKKREKRKQNEIKQKEITRMQMQM). 2 disordered regions span residues 485 to 529 (AKEA…SDSD) and 565 to 642 (EADL…AREV). Acidic residues-rich tracts occupy residues 516–529 (VDDD…SDSD), 591–610 (VSEE…DSDF), and 618–630 (DESD…EDEA). Positions 631–642 (ERSQKEKHAREV) are enriched in basic and acidic residues.

This sequence belongs to the class I-like SAM-binding methyltransferase superfamily. RNA methyltransferase RlmE family. SPB1 subfamily. In terms of assembly, component of the nucleolar and nucleoplasmic pre-60S ribosomal particle.

It localises to the nucleus. The protein localises to the nucleolus. It catalyses the reaction a ribonucleotide in rRNA + S-adenosyl-L-methionine = a 2'-O-methylribonucleotide in rRNA + S-adenosyl-L-homocysteine + H(+). In terms of biological role, required for proper assembly of pre-ribosomal particles during the biogenesis of the 60S ribosomal subunit. The chain is AdoMet-dependent rRNA methyltransferase SPB1 from Eremothecium gossypii (strain ATCC 10895 / CBS 109.51 / FGSC 9923 / NRRL Y-1056) (Yeast).